Consider the following 84-residue polypeptide: Carboxysome shell vertex protein CsoS4B (84 aa).

Residues 1-77 (MQILQVKKQL…TDLTVGGIID (77 aa)) enclose the BMV domain.

It belongs to the CcmL/EutN family. CsoS4 subfamily. In terms of assembly, homopentamer.

Its subcellular location is the carboxysome. In terms of biological role, probably forms vertices in the carboxysome, a polyhedral inclusion where RuBisCO (ribulose bisphosphate carboxylase, cbbL-cbbS) is sequestered. Has been modeled to induce curvature upon insertion into an otherwise flat hexagonal layer of major carboxysome subunits. This is Carboxysome shell vertex protein CsoS4B from Hydrogenovibrio crunogenus (strain DSM 25203 / XCL-2) (Thiomicrospira crunogena).